Reading from the N-terminus, the 321-residue chain is Peroxidase 28 (321 aa).

A signal peptide spans 1–21 (MKIATFSVLLLLLFIFPVALA). Cystine bridges form between Cys32/Cys111, Cys65/Cys70, Cys117/Cys317, and Cys196/Cys228. The active-site Proton acceptor is His63. Ca(2+) contacts are provided by Asp64, Val67, Gly69, Asp71, and Ser73. Residue Pro159 coordinates substrate. Heme b is bound at residue His189. Residue Thr190 coordinates Ca(2+). The Ca(2+) site is built by Asp238, Thr244, and Asp249.

It belongs to the peroxidase family. Classical plant (class III) peroxidase subfamily. It depends on heme b as a cofactor. Ca(2+) is required as a cofactor.

It is found in the secreted. It carries out the reaction 2 a phenolic donor + H2O2 = 2 a phenolic radical donor + 2 H2O. Removal of H(2)O(2), oxidation of toxic reductants, biosynthesis and degradation of lignin, suberization, auxin catabolism, response to environmental stresses such as wounding, pathogen attack and oxidative stress. These functions might be dependent on each isozyme/isoform in each plant tissue. In Arabidopsis thaliana (Mouse-ear cress), this protein is Peroxidase 28 (PER28).